The chain runs to 543 residues: Phosphoribosylaminoimidazole carboxylase (543 aa).

The 188-residue stretch at 110–297 folds into the ATP-grasp domain; that stretch reads KEHLIKNGIA…QFEAHVRAIT (188 aa). Residue 137–192 coordinates ATP; sequence GAKYGFPYMLKSRTMAYDGRGNFVVKDKSYIPEALKVLDDRPLYAEKWAPFSKELA.

The protein in the C-terminal section; belongs to the AIR carboxylase family. Class I subfamily.

It carries out the reaction 5-amino-1-(5-phospho-D-ribosyl)imidazole-4-carboxylate + H(+) = 5-amino-1-(5-phospho-beta-D-ribosyl)imidazole + CO2. Its pathway is purine metabolism; IMP biosynthesis via de novo pathway; 5-amino-1-(5-phospho-D-ribosyl)imidazole-4-carboxylate from 5-amino-1-(5-phospho-D-ribosyl)imidazole (carboxylase route): step 1/1. The chain is Phosphoribosylaminoimidazole carboxylase (ADE1) from Ogataea methanolica (Yeast).